A 628-amino-acid polypeptide reads, in one-letter code: MKLSWKTLLLWSLPIFVVGFFFWQGFLGPTTTDVGSNIASSRMTYGRFLEYLDMGWVKRVDLYENNHTAIVEAVGPELGNRVQRIRVELPASAPELITKLRKANVDLDAHPPKSTSAVWGLLGNLLFPLILVGGLAFLFRRSNNASGGPGQAMSFGKSKALFQMEAKTGVVFNDVAGVEEAKEEFQEVVTFLKQPESFTAVGAKIPKGVLLVGPPGTGKTLLAKAIAGEAGVPFFSISGSEFVEMFVGVGASRVRDLFKKAKDNAPCIVFIDEIDAVGRQRGTGVGGGNDEREQTLNQLLTEMDGFEGNTGVIVIAATNRADILDSALLRPGRFDRQVSVDVPDFRGRLAILEVHAKNKKMESKVSLETIARRTPGFSGADLANLLNEAAILTARRRKSAMTMSEIDTSIDRVVAGLEGTPLIDSKSKRLIAYHEVGHAIIGSLLEHHDPVQKVTLIPRGQARGLTWFTPSDDQSLISRSQILARIVGALGGRAAEEIIFGDAEVTTGASNDLQQVTSMARQMVTRFGMSKIGPLSLESQGSDPFLGRGMGGGSEYSDEVATNIDKQVREIVSECYKEAKKIVKDNRVVMDRLVDLLIEKETIEGNEFRHIVKEYTAIPEKNYYISQF.

The Stromal portion of the chain corresponds to 1–7 (MKLSWKT). Residues 8–28 (LLLWSLPIFVVGFFFWQGFLG) traverse the membrane as a helical segment. Topologically, residues 29–118 (PTTTDVGSNI…AHPPKSTSAV (90 aa)) are lumenal. A helical transmembrane segment spans residues 119 to 139 (WGLLGNLLFPLILVGGLAFLF). Residues 140–628 (RRSNNASGGP…PEKNYYISQF (489 aa)) lie on the Stromal side of the membrane. 213–220 (GPPGTGKT) contributes to the ATP binding site. Position 434 (His434) interacts with Zn(2+). Glu435 is a catalytic residue. Zn(2+)-binding residues include His438 and Asp512.

This sequence in the central section; belongs to the AAA ATPase family. The protein in the C-terminal section; belongs to the peptidase M41 family. As to quaternary structure, homohexamer. The cofactor is Zn(2+).

The protein localises to the plastid. It localises to the chloroplast thylakoid membrane. Functionally, acts as a processive, ATP-dependent zinc metallopeptidase. The chain is ATP-dependent zinc metalloprotease FtsH from Porphyra purpurea (Red seaweed).